A 332-amino-acid chain; its full sequence is RNA polymerase principal sigma factor HrdD (332 aa).

The tract at residues 1–21 (MATRAVARRQPAASGETGAAG) is disordered. The Polymerase core binding motif lies at 124–137 (DLIQEGNAGLVRAV). The segment at residues 294-313 (LTEVGKQHGLTRERIRQIEK) is a DNA-binding region (H-T-H motif).

Belongs to the sigma-70 factor family.

Functionally, sigma factors are initiation factors that promote the attachment of RNA polymerase to specific initiation sites and are then released. The polypeptide is RNA polymerase principal sigma factor HrdD (hrdD) (Streptomyces griseus).